A 138-amino-acid polypeptide reads, in one-letter code: ATP synthase epsilon chain, chloroplastic (138 aa).

It belongs to the ATPase epsilon chain family. In terms of assembly, F-type ATPases have 2 components, CF(1) - the catalytic core - and CF(0) - the membrane proton channel. CF(1) has five subunits: alpha(3), beta(3), gamma(1), delta(1), epsilon(1). CF(0) has three main subunits: a, b and c.

The protein localises to the plastid. It localises to the chloroplast thylakoid membrane. Functionally, produces ATP from ADP in the presence of a proton gradient across the membrane. In Galdieria sulphuraria (Red alga), this protein is ATP synthase epsilon chain, chloroplastic.